We begin with the raw amino-acid sequence, 503 residues long: Aromatase (503 aa).

2 consecutive transmembrane segments (helical) span residues 19 to 39 (EVMP…FFVW) and 51 to 71 (GYCM…MGLG). The segment at 294–324 (ENVNQCILEMMIAAPDTLSVTVFFMLCLIAQ) is substrate-binding pocket. 2 residues coordinate substrate: Asp309 and Met374. Cys437 contributes to the heme binding site.

This sequence belongs to the cytochrome P450 family. Heme serves as cofactor. In terms of tissue distribution, expressed in placenta. Highly expressed in follicles (0 hour:hCG), followed by a drop (12-24 hour:hCG) and by an increase (30-39 hour:hCG). Highly expressed in corpora lutea. Also expressed in granulosa cell layer. Not expressed in theca interna.

Its subcellular location is the endoplasmic reticulum membrane. It localises to the microsome membrane. The enzyme catalyses testosterone + 3 reduced [NADPH--hemoprotein reductase] + 3 O2 = 17beta-estradiol + formate + 3 oxidized [NADPH--hemoprotein reductase] + 4 H2O + 4 H(+). It catalyses the reaction androst-4-ene-3,17-dione + 3 reduced [NADPH--hemoprotein reductase] + 3 O2 = estrone + formate + 3 oxidized [NADPH--hemoprotein reductase] + 4 H2O + 4 H(+). The catalysed reaction is androst-4-ene-3,17-dione + reduced [NADPH--hemoprotein reductase] + O2 = 19-hydroxyandrost-4-ene-3,17-dione + oxidized [NADPH--hemoprotein reductase] + H2O + H(+). It carries out the reaction 19-hydroxyandrost-4-ene-3,17-dione + reduced [NADPH--hemoprotein reductase] + O2 = 19-oxo-androst-4-ene-3,17-dione + oxidized [NADPH--hemoprotein reductase] + 2 H2O + H(+). The enzyme catalyses 19-oxo-androst-4-ene-3,17-dione + reduced [NADPH--hemoprotein reductase] + O2 = estrone + formate + oxidized [NADPH--hemoprotein reductase] + H2O + 2 H(+). It catalyses the reaction estrone + reduced [NADPH--hemoprotein reductase] + O2 = 2-hydroxyestrone + oxidized [NADPH--hemoprotein reductase] + H2O + H(+). The catalysed reaction is 17beta-hydroxy-5alpha-androstan-3-one + reduced [NADPH--hemoprotein reductase] + O2 = 17beta,19-dihydroxy-3-oxo-5alpha-androstanone + oxidized [NADPH--hemoprotein reductase] + H2O + H(+). It carries out the reaction 17beta,19-dihydroxy-3-oxo-5alpha-androstanone + reduced [NADPH--hemoprotein reductase] + O2 = 17beta-hydroxy-3,19-dioxo-5alpha-androstanone + oxidized [NADPH--hemoprotein reductase] + 2 H2O + H(+). The enzyme catalyses 17beta-hydroxy-3,19-dioxo-5alpha-androstanone + reduced [NADPH--hemoprotein reductase] + O2 = 17beta-hydroxy-3-oxo-19-nor-5alpha-androst-1-ene + formate + oxidized [NADPH--hemoprotein reductase] + H2O + 2 H(+). Its pathway is steroid hormone biosynthesis. A cytochrome P450 monooxygenase that catalyzes the conversion of C19 androgens, androst-4-ene-3,17-dione (androstenedione) and testosterone to the C18 estrogens, estrone and estradiol, respectively. Catalyzes three successive oxidations of C19 androgens: two conventional oxidations at C19 yielding 19-hydroxy and 19-oxo/19-aldehyde derivatives, followed by a third oxidative aromatization step that involves C1-beta hydrogen abstraction combined with cleavage of the C10-C19 bond to yield a phenolic A ring and formic acid. Alternatively, the third oxidative reaction yields a 19-norsteroid and formic acid. Converts dihydrotestosterone to delta1,10-dehydro 19-nordihydrotestosterone and may play a role in homeostasis of this potent androgen. Also displays 2-hydroxylase activity toward estrone. Mechanistically, uses molecular oxygen inserting one oxygen atom into a substrate, and reducing the second into a water molecule, with two electrons provided by NADPH via cytochrome P450 reductase (CPR; NADPH-ferrihemoprotein reductase). The chain is Aromatase (CYP19A1) from Equus caballus (Horse).